Here is a 545-residue protein sequence, read N- to C-terminus: Glucose starvation modulator protein 1 (545 aa).

Positions 20–48 (CGFCHEKHLQCDVGRPCQNCRKRNIASFC) form a DNA-binding region, zn(2)-C6 fungal-type. Positions 51 to 60 (KVKRRRKRKR) are enriched in basic residues. Disordered regions lie at residues 51-131 (KVKR…AMKD) and 228-270 (YISL…WQQQ). Over residues 61–71 (SDASNFDKDEA) the composition is skewed to basic and acidic residues. The segment covering 72–92 (ATQTLNFNTVNPGEGSSSAMT) has biased composition (polar residues). Residues 98 to 110 (TGTTTATTTRTTT) show a composition bias toward low complexity. Residues 111 to 125 (NFRSESKASSSTENI) are compositionally biased toward polar residues. A compositionally biased stretch (low complexity) spans 257 to 270 (QQKESQQMQLWQQQ). The PAS domain maps to 416–486 (ELENMSKLVN…DLFHEHLAFG (71 aa)).

Belongs to the ERT1/acuK family.

The protein resides in the nucleus. Transcription factor which regulates nonfermentable carbon utilization. The protein is Glucose starvation modulator protein 1 (GSM1) of Zygosaccharomyces rouxii (strain ATCC 2623 / CBS 732 / NBRC 1130 / NCYC 568 / NRRL Y-229).